The primary structure comprises 85 residues: Conotoxin Lt28.2 (85 aa).

Positions 1-21 are cleaved as a signal peptide; the sequence is MPKLEMMLLVLLILPLCYIDA. A propeptide spanning residues 22 to 40 is cleaved from the precursor; it reads VGPPPPWNMEDEIIEHWQK.

It belongs to the conotoxin D superfamily. Contains 5 disulfide bonds. Expressed by the venom duct.

It is found in the secreted. Functionally, probable neurotoxin. This is Conotoxin Lt28.2 from Conus litteratus (Lettered cone).